Here is a 320-residue protein sequence, read N- to C-terminus: GTP 3',8-cyclase (320 aa).

The Radical SAM core domain occupies 4–226 (TFQRSINYMR…PIITDATSPA (223 aa)). Arg13 is a GTP binding site. The [4Fe-4S] cluster site is built by Cys20 and Cys24. Tyr26 lines the S-adenosyl-L-methionine pocket. Cys27 lines the [4Fe-4S] cluster pocket. Position 63 (Arg63) interacts with GTP. Gly67 lines the S-adenosyl-L-methionine pocket. Thr94 contacts GTP. Ser118 contacts S-adenosyl-L-methionine. Lys155 contributes to the GTP binding site. Met189 contributes to the S-adenosyl-L-methionine binding site. Positions 249 and 252 each coordinate [4Fe-4S] cluster. Position 254-256 (254-256 (RIR)) interacts with GTP. Cys266 contacts [4Fe-4S] cluster.

This sequence belongs to the radical SAM superfamily. MoaA family. In terms of assembly, monomer and homodimer. The cofactor is [4Fe-4S] cluster.

The enzyme catalyses GTP + AH2 + S-adenosyl-L-methionine = (8S)-3',8-cyclo-7,8-dihydroguanosine 5'-triphosphate + 5'-deoxyadenosine + L-methionine + A + H(+). The protein operates within cofactor biosynthesis; molybdopterin biosynthesis. Catalyzes the cyclization of GTP to (8S)-3',8-cyclo-7,8-dihydroguanosine 5'-triphosphate. This chain is GTP 3',8-cyclase, found in Alkaliphilus metalliredigens (strain QYMF).